The chain runs to 98 residues: DNA-binding protein Fis (98 aa).

The segment at residues Gln74–Lys93 is a DNA-binding region (H-T-H motif).

It belongs to the transcriptional regulatory Fis family. As to quaternary structure, homodimer.

In terms of biological role, activates ribosomal RNA transcription. Plays a direct role in upstream activation of rRNA promoters. The chain is DNA-binding protein Fis from Proteus hauseri.